Here is a 479-residue protein sequence, read N- to C-terminus: Bifunctional protein HldE (479 aa).

Residues 1 to 319 (MTVILPDFLK…NVVQKYEYTK (319 aa)) form a ribokinase region. Residue 195–198 (NMSE) participates in ATP binding. Residue D264 is part of the active site. A cytidylyltransferase region spans residues 346–479 (MTNGVFDILH…IDTMEINEIN (134 aa)).

It in the N-terminal section; belongs to the carbohydrate kinase PfkB family. In the C-terminal section; belongs to the cytidylyltransferase family. In terms of assembly, homodimer.

The enzyme catalyses D-glycero-beta-D-manno-heptose 7-phosphate + ATP = D-glycero-beta-D-manno-heptose 1,7-bisphosphate + ADP + H(+). It carries out the reaction D-glycero-beta-D-manno-heptose 1-phosphate + ATP + H(+) = ADP-D-glycero-beta-D-manno-heptose + diphosphate. Its pathway is nucleotide-sugar biosynthesis; ADP-L-glycero-beta-D-manno-heptose biosynthesis; ADP-L-glycero-beta-D-manno-heptose from D-glycero-beta-D-manno-heptose 7-phosphate: step 1/4. The protein operates within nucleotide-sugar biosynthesis; ADP-L-glycero-beta-D-manno-heptose biosynthesis; ADP-L-glycero-beta-D-manno-heptose from D-glycero-beta-D-manno-heptose 7-phosphate: step 3/4. In terms of biological role, catalyzes the phosphorylation of D-glycero-D-manno-heptose 7-phosphate at the C-1 position to selectively form D-glycero-beta-D-manno-heptose-1,7-bisphosphate. Catalyzes the ADP transfer from ATP to D-glycero-beta-D-manno-heptose 1-phosphate, yielding ADP-D-glycero-beta-D-manno-heptose. The polypeptide is Bifunctional protein HldE (Blochmanniella floridana).